The primary structure comprises 317 residues: L-lactate dehydrogenase (317 aa).

Residues phenylalanine 16–valine 17, aspartate 38, lysine 43, tyrosine 69, and glycine 83–alanine 84 each bind NAD(+). 2 residues coordinate substrate: glutamine 86 and arginine 92. NAD(+) is bound by residues serine 105, alanine 122–asparagine 124, and serine 147. Residue asparagine 124–aspartate 127 participates in substrate binding. Aspartate 152–arginine 155 contacts substrate. Residues arginine 157 and glutamine 169–histidine 172 each bind beta-D-fructose 1,6-bisphosphate. The active-site Proton acceptor is the histidine 179. Tyrosine 224 is modified (phosphotyrosine). Residue threonine 233 participates in substrate binding.

It belongs to the LDH/MDH superfamily. LDH family. In terms of assembly, exists as a dimer and a tetramer (dimer of dimers). The conversion occurs via the binding of fructose 1,6-bisphosphate (FBP) to the dimer.

It localises to the cytoplasm. It carries out the reaction (S)-lactate + NAD(+) = pyruvate + NADH + H(+). It participates in fermentation; pyruvate fermentation to lactate; (S)-lactate from pyruvate: step 1/1. Allosterically activated by fructose 1,6-bisphosphate (FBP). The improvement in affinity for substrate occurs in two steps; the binding of fructose 1,6-bisphosphate (FBP) to the dimer, and the dimer to tetramer conversion. In terms of biological role, catalyzes the conversion of lactate to pyruvate. The chain is L-lactate dehydrogenase from Geobacillus stearothermophilus (Bacillus stearothermophilus).